Here is a 391-residue protein sequence, read N- to C-terminus: UPF0229 protein CA_C0580 (391 aa).

2 disordered regions span residues 1–20 and 75–109; these read MAIF…TIGD and VGSG…NSEG. The span at 96 to 106 shows a compositional bias: gly residues; that stretch reads GSKGKGKGAGN.

This sequence belongs to the UPF0229 family.

This Clostridium acetobutylicum (strain ATCC 824 / DSM 792 / JCM 1419 / IAM 19013 / LMG 5710 / NBRC 13948 / NRRL B-527 / VKM B-1787 / 2291 / W) protein is UPF0229 protein CA_C0580.